Here is a 168-residue protein sequence, read N- to C-terminus: Microtubule-associated protein Jupiter (168 aa).

A compositionally biased stretch (polar residues) spans Met1–Ser14. Residues Met1–Pro33 are disordered. Ser24 is modified (phosphoserine). Phosphothreonine is present on Thr35. Residues Arg76 to Leu87 show a composition bias toward basic and acidic residues. 2 disordered regions span residues Arg76–Ile106 and Asn124–Lys168. Phosphothreonine occurs at positions 92 and 96. Ser105, Ser133, and Ser144 each carry phosphoserine. The span at Ser131–Ser144 shows a compositional bias: low complexity. A compositionally biased stretch (polar residues) spans Thr145 to Arg155.

This sequence belongs to the MAP Jupiter family.

The protein resides in the nucleus. It localises to the cytoplasm. Its subcellular location is the cytoskeleton. It is found in the spindle. Binds to all microtubule populations. The protein is Microtubule-associated protein Jupiter of Drosophila simulans (Fruit fly).